The following is a 156-amino-acid chain: 3-hydroxyacyl-[acyl-carrier-protein] dehydratase FabZ (156 aa).

Residue His54 is part of the active site.

This sequence belongs to the thioester dehydratase family. FabZ subfamily.

The protein localises to the cytoplasm. The enzyme catalyses a (3R)-hydroxyacyl-[ACP] = a (2E)-enoyl-[ACP] + H2O. Its function is as follows. Involved in unsaturated fatty acids biosynthesis. Catalyzes the dehydration of short chain beta-hydroxyacyl-ACPs and long chain saturated and unsaturated beta-hydroxyacyl-ACPs. The protein is 3-hydroxyacyl-[acyl-carrier-protein] dehydratase FabZ of Koribacter versatilis (strain Ellin345).